Consider the following 396-residue polypeptide: Ribosomal RNA large subunit methyltransferase I (396 aa).

The PUA domain maps to Ser2–Arg81.

Belongs to the methyltransferase superfamily. RlmI family.

It is found in the cytoplasm. It carries out the reaction cytidine(1962) in 23S rRNA + S-adenosyl-L-methionine = 5-methylcytidine(1962) in 23S rRNA + S-adenosyl-L-homocysteine + H(+). Specifically methylates the cytosine at position 1962 (m5C1962) of 23S rRNA. This Shigella flexneri serotype 5b (strain 8401) protein is Ribosomal RNA large subunit methyltransferase I.